Consider the following 337-residue polypeptide: Ketol-acid reductoisomerase (NADP(+)) (337 aa).

Residues 1 to 180 (MFYEKDADVD…GGGKSGIIET (180 aa)) form the KARI N-terminal Rossmann domain. NADP(+)-binding positions include 22–25 (YGSQ), Arg46, Ser49, Ser51, and 81–84 (DELQ). The active site involves His106. Gly132 provides a ligand contact to NADP(+). A KARI C-terminal knotted domain is found at 181-326 (TFKDECETDL…AELRAMMPWI (146 aa)). Mg(2+) is bound by residues Asp189, Glu193, Glu225, and Glu229. Ser250 lines the substrate pocket.

This sequence belongs to the ketol-acid reductoisomerase family. It depends on Mg(2+) as a cofactor.

The enzyme catalyses (2R)-2,3-dihydroxy-3-methylbutanoate + NADP(+) = (2S)-2-acetolactate + NADPH + H(+). It carries out the reaction (2R,3R)-2,3-dihydroxy-3-methylpentanoate + NADP(+) = (S)-2-ethyl-2-hydroxy-3-oxobutanoate + NADPH + H(+). It functions in the pathway amino-acid biosynthesis; L-isoleucine biosynthesis; L-isoleucine from 2-oxobutanoate: step 2/4. Its pathway is amino-acid biosynthesis; L-valine biosynthesis; L-valine from pyruvate: step 2/4. Functionally, involved in the biosynthesis of branched-chain amino acids (BCAA). Catalyzes an alkyl-migration followed by a ketol-acid reduction of (S)-2-acetolactate (S2AL) to yield (R)-2,3-dihydroxy-isovalerate. In the isomerase reaction, S2AL is rearranged via a Mg-dependent methyl migration to produce 3-hydroxy-3-methyl-2-ketobutyrate (HMKB). In the reductase reaction, this 2-ketoacid undergoes a metal-dependent reduction by NADPH to yield (R)-2,3-dihydroxy-isovalerate. This Pelagibacter ubique (strain HTCC1062) protein is Ketol-acid reductoisomerase (NADP(+)).